We begin with the raw amino-acid sequence, 214 residues long: Non-structural protein NP-1 (214 aa).

Disordered regions lie at residues 1–85 (MSSE…TRTN) and 192–214 (ESEE…NASN). Basic residues predominate over residues 33–43 (SRSRSPIRRHG). Positions 44–55 (EKNLEYAHHNNQ) are enriched in basic and acidic residues. Polar residues predominate over residues 56–71 (DNRQSSYTASKTSDQA). Positions 192-201 (ESEEVTDEEM) are enriched in acidic residues.

It belongs to the Bocaparvovirus Non-structural protein NP-1 family.

It localises to the host nucleus. Functionally, required for the expression of the capsid proteins. Performs the splicing and internal polyadenylation of the viral capsid-encoding mRNA precursor, which allows its maturation and expression. Transactivates the viral promoter. The polypeptide is Non-structural protein NP-1 (NP1) (Human bocavirus 4 (HBoV4)).